A 279-amino-acid polypeptide reads, in one-letter code: Secreted RxLR effector protein 90 (279 aa).

The signal sequence occupies residues 1-19 (MKSAAAFATFLTLSVFVAT). The RxLR-dEER motif lies at 29–46 (RGLRSLADNQSTESSEGR). Disordered stretches follow at residues 29-53 (RGLRSLADNQSTESSEGRKDHYNHH) and 135-176 (ATPA…NLAG). Asparagine 37 is a glycosylation site (N-linked (GlcNAc...) asparagine). Over residues 135 to 146 (ATPAPTTSVPSS) the composition is skewed to low complexity. The segment covering 147–163 (LVNTDTSDNQLPTTPVA) has biased composition (polar residues). The span at 166-176 (QGGGIGSNLAG) shows a compositional bias: gly residues. Asparagine 217 carries an N-linked (GlcNAc...) asparagine glycan.

It belongs to the RxLR effector family.

Its subcellular location is the secreted. The protein resides in the host cell membrane. Functionally, secreted effector that completely suppresses the host cell death induced by cell death-inducing proteins. In Plasmopara viticola (Downy mildew of grapevine), this protein is Secreted RxLR effector protein 90.